We begin with the raw amino-acid sequence, 509 residues long: Coiled-coil domain-containing protein 181 (509 aa).

A compositionally biased stretch (basic and acidic residues) spans 60 to 82 (EHTKQHSDPDKSLQDDVSPRRND). Disordered stretches follow at residues 60-121 (EHTK…EEDE) and 285-367 (GEPL…EEKE). Over residues 320 to 334 (RTQSARISPVTSTYC) the composition is skewed to polar residues. Residues 335–375 (LSPRQKELQKQLEQKREKLKREEEQRKIEEEKEKKRENDIV) are a coiled coil. Positions 338-367 (RQKELQKQLEQKREKLKREEEQRKIEEEKE) are enriched in basic and acidic residues.

This sequence belongs to the CCDC181 family. In terms of assembly, homodimer. Interacts with HOOK1. Interacts with HOOK2. Interacts with HOOK3.

It is found in the cytoplasm. The protein localises to the cytoskeleton. Its subcellular location is the cell projection. The protein resides in the cilium. It localises to the flagellum. Functionally, microtubule-binding protein that localizes to the microtubular manchette of elongating spermatids. This is Coiled-coil domain-containing protein 181 from Macaca fascicularis (Crab-eating macaque).